The chain runs to 228 residues: Probable octanoyltransferase (228 aa).

Residues 27 to 198 form the BPL/LPL catalytic domain; the sequence is SGGDDAFILV…AFEEVFEAKV (172 aa). Residues 65-72, 129-131, and 142-144 contribute to the substrate site; these read RGGDATYH, SIG, and GVA. Residue Cys-160 is the Acyl-thioester intermediate of the active site.

Belongs to the LipB family.

It localises to the cytoplasm. The enzyme catalyses octanoyl-[ACP] + L-lysyl-[protein] = N(6)-octanoyl-L-lysyl-[protein] + holo-[ACP] + H(+). Its pathway is protein modification; protein lipoylation via endogenous pathway; protein N(6)-(lipoyl)lysine from octanoyl-[acyl-carrier-protein]: step 1/2. Its function is as follows. Catalyzes the transfer of endogenously produced octanoic acid from octanoyl-acyl-carrier-protein onto the lipoyl domains of lipoate-dependent enzymes. Lipoyl-ACP can also act as a substrate although octanoyl-ACP is likely to be the physiological substrate. This chain is Probable octanoyltransferase, found in Pyrobaculum calidifontis (strain DSM 21063 / JCM 11548 / VA1).